We begin with the raw amino-acid sequence, 284 residues long: Acetylglutamate kinase (284 aa).

Substrate contacts are provided by residues 64 to 65 (GG), Arg-86, and Asn-181.

This sequence belongs to the acetylglutamate kinase family. ArgB subfamily.

Its subcellular location is the cytoplasm. The enzyme catalyses N-acetyl-L-glutamate + ATP = N-acetyl-L-glutamyl 5-phosphate + ADP. It functions in the pathway amino-acid biosynthesis; L-arginine biosynthesis; N(2)-acetyl-L-ornithine from L-glutamate: step 2/4. In terms of biological role, catalyzes the ATP-dependent phosphorylation of N-acetyl-L-glutamate. This chain is Acetylglutamate kinase, found in Wolinella succinogenes (strain ATCC 29543 / DSM 1740 / CCUG 13145 / JCM 31913 / LMG 7466 / NCTC 11488 / FDC 602W) (Vibrio succinogenes).